The sequence spans 1177 residues: DNA-directed RNA polymerase subunit beta (1177 aa).

Over residues 1147 to 1161 (DDTEIEMRDTEDDDD) the composition is skewed to acidic residues. Positions 1147–1177 (DDTEIEMRDTEDDDDHQSADKLNVEVETTKE) are disordered. A compositionally biased stretch (basic and acidic residues) spans 1162-1177 (HQSADKLNVEVETTKE).

This sequence belongs to the RNA polymerase beta chain family. As to quaternary structure, the RNAP catalytic core consists of 2 alpha, 1 beta, 1 beta' and 1 omega subunit. When a sigma factor is associated with the core the holoenzyme is formed, which can initiate transcription.

The catalysed reaction is RNA(n) + a ribonucleoside 5'-triphosphate = RNA(n+1) + diphosphate. DNA-dependent RNA polymerase catalyzes the transcription of DNA into RNA using the four ribonucleoside triphosphates as substrates. The polypeptide is DNA-directed RNA polymerase subunit beta (Bacillus anthracis (strain A0248)).